A 350-amino-acid chain; its full sequence is tRNA uridine(34) hydroxylase (350 aa).

One can recognise a Rhodanese domain in the interval 146–240 (DDPDAVFIDM…YARRAREQGL (95 aa)). The active-site Cysteine persulfide intermediate is the C200. The segment covering 319 to 328 (RRRRAGRENG) has biased composition (basic and acidic residues). The disordered stretch occupies residues 319–350 (RRRRAGRENGNKIFNKSRGRLNSKLSIPDPAE).

This sequence belongs to the TrhO family.

The catalysed reaction is uridine(34) in tRNA + AH2 + O2 = 5-hydroxyuridine(34) in tRNA + A + H2O. Its function is as follows. Catalyzes oxygen-dependent 5-hydroxyuridine (ho5U) modification at position 34 in tRNAs. This is tRNA uridine(34) hydroxylase from Salmonella heidelberg (strain SL476).